The following is a 181-amino-acid chain: Adenine phosphoribosyltransferase (181 aa).

It belongs to the purine/pyrimidine phosphoribosyltransferase family. As to quaternary structure, homodimer.

The protein resides in the cytoplasm. It catalyses the reaction AMP + diphosphate = 5-phospho-alpha-D-ribose 1-diphosphate + adenine. The protein operates within purine metabolism; AMP biosynthesis via salvage pathway; AMP from adenine: step 1/1. Catalyzes a salvage reaction resulting in the formation of AMP, that is energically less costly than de novo synthesis. This is Adenine phosphoribosyltransferase (Aprt) from Drosophila pseudoobscura pseudoobscura (Fruit fly).